The sequence spans 568 residues: Sphingosine-1-phosphate lyase 1 (568 aa).

The Lumenal segment spans residues 1-40 (MPGTDLLKLKDFEPYLEILESYSTKAKNYVNGYCTKYEPW). Residues 41–61 (QLIAWSVLCTLLIVWVYELIF) traverse the membrane as a helical; Signal-anchor for type III membrane protein segment. At 62-568 (QPESLWSRFK…NQMNGSPKPR (507 aa)) the chain is on the cytoplasmic side. K353 bears the N6-(pyridoxal phosphate)lysine; alternate mark. K353 carries the post-translational modification N6-acetyllysine; alternate. Y356 and Y366 each carry 3'-nitrotyrosine. S564 carries the post-translational modification Phosphoserine.

This sequence belongs to the group II decarboxylase family. Sphingosine-1-phosphate lyase subfamily. Pyridoxal 5'-phosphate is required as a cofactor. As to expression, highest levels are found in liver, small intestine and thymus, followed by kidney, lung, heart, spleen and brain (at protein level). Also detected in stomach, testis and skeletal muscle (at protein level).

Its subcellular location is the endoplasmic reticulum membrane. The enzyme catalyses sphinganine 1-phosphate = hexadecanal + phosphoethanolamine. It carries out the reaction sphing-4-enine 1-phosphate = (2E)-hexadecenal + phosphoethanolamine. The protein operates within lipid metabolism; sphingolipid metabolism. Functionally, cleaves phosphorylated sphingoid bases (PSBs), such as sphingosine-1-phosphate, into fatty aldehydes and phosphoethanolamine. Elevates stress-induced ceramide production and apoptosis. Required for global lipid homeostasis in liver and cholesterol homeostasis in fibroblasts. Involved in the regulation of pro-inflammatory response and neutrophil trafficking. Modulates neuronal autophagy via phosphoethanolamine production which regulates accumulation of aggregate-prone proteins such as APP. Seems to play a role in establishing neuronal contact sites and axonal maintenance. This chain is Sphingosine-1-phosphate lyase 1, found in Mus musculus (Mouse).